The sequence spans 508 residues: Nucleolar complex protein 4 homolog (508 aa).

Helical transmembrane passes span Val-288–Ile-308, His-341–Ile-361, and Leu-367–Phe-387.

This sequence belongs to the CBF/MAK21 family.

It is found in the nucleus membrane. The protein localises to the nucleus. It localises to the nucleolus. The protein is Nucleolar complex protein 4 homolog (NOC4L) of Gallus gallus (Chicken).